A 165-amino-acid polypeptide reads, in one-letter code: ATP synthase subunit b (165 aa).

Residues 10–30 (LIFWMLLSFGIVFAVLAKYGF) form a helical membrane-spanning segment.

Belongs to the ATPase B chain family. In terms of assembly, F-type ATPases have 2 components, F(1) - the catalytic core - and F(0) - the membrane proton channel. F(1) has five subunits: alpha(3), beta(3), gamma(1), delta(1), epsilon(1). F(0) has three main subunits: a(1), b(2) and c(10-14). The alpha and beta chains form an alternating ring which encloses part of the gamma chain. F(1) is attached to F(0) by a central stalk formed by the gamma and epsilon chains, while a peripheral stalk is formed by the delta and b chains.

The protein localises to the cell inner membrane. Functionally, f(1)F(0) ATP synthase produces ATP from ADP in the presence of a proton or sodium gradient. F-type ATPases consist of two structural domains, F(1) containing the extramembraneous catalytic core and F(0) containing the membrane proton channel, linked together by a central stalk and a peripheral stalk. During catalysis, ATP synthesis in the catalytic domain of F(1) is coupled via a rotary mechanism of the central stalk subunits to proton translocation. Its function is as follows. Component of the F(0) channel, it forms part of the peripheral stalk, linking F(1) to F(0). This is ATP synthase subunit b from Bacteroides fragilis (strain ATCC 25285 / DSM 2151 / CCUG 4856 / JCM 11019 / LMG 10263 / NCTC 9343 / Onslow / VPI 2553 / EN-2).